We begin with the raw amino-acid sequence, 482 residues long: 7-deoxyloganetic acid glucosyltransferase (482 aa).

Histidine 22 serves as the catalytic Proton acceptor. Position 22 (histidine 22) interacts with an anthocyanidin. Catalysis depends on aspartate 127, which acts as the Charge relay. UDP-alpha-D-glucose contacts are provided by threonine 149, alanine 362, glutamine 364, histidine 379, tryptophan 382, asparagine 383, serine 384, and glutamate 387. Alanine 402 is a binding site for an anthocyanidin. Positions 403 and 404 each coordinate UDP-alpha-D-glucose.

The protein belongs to the UDP-glycosyltransferase family. Expressed in leaves, roots and stems. Lower levels of expression in flowers. Preferentially expressed in internal phloem parenchyma cells.

The catalysed reaction is 7-deoxyloganetate + UDP-alpha-D-glucose = 7-deoxyloganate + UDP + H(+). Iridoid glucosyltransferase acting exclusively on 7-deoxyloganetic acid. No activity with 7-deoxyloganetin. Catalyzes the fourth to last step in secologanin biosynthesis. The polypeptide is 7-deoxyloganetic acid glucosyltransferase (UGT709C2) (Catharanthus roseus (Madagascar periwinkle)).